Here is a 945-residue protein sequence, read N- to C-terminus: Sensor kinase CckA (945 aa).

2 helical membrane passes run 111-131 (ALRL…YFLF) and 139-159 (FALV…FGAA). 3 PAS domains span residues 171–212 (HQDL…TDAD), 313–341 (LDHA…EWLG), and 432–505 (AEVR…FAGQ). A Histidine kinase domain is found at 574–797 (GIAHDFNNVL…TFKIFLPRLI (224 aa)). His577 carries the phosphohistidine; by autocatalysis modification. The Response regulatory domain occupies 825 to 941 (TVLLVEDEDA…QLATTVKEML (117 aa)). Asp876 carries the 4-aspartylphosphate modification.

It localises to the cell inner membrane. The catalysed reaction is ATP + protein L-histidine = ADP + protein N-phospho-L-histidine.. Functionally, component of a regulatory phosphorelay system that controls B.abortus cell growth, division, and intracellular survival inside mammalian host cells. This signaling pathway is composed of CckA, ChpT, CtrA and CpdR. CckA autophosphorylates in the presence of ATP on a conserved His residue and transfers a phosphoryl group to a conserved Asp residue on its C-terminal receiver domain. CckA-P transfers phosphoryl groups to the ChpT phosphotransferase. In Brucella abortus (strain 2308), this protein is Sensor kinase CckA.